A 645-amino-acid polypeptide reads, in one-letter code: Rab11 family-interacting protein 1 (645 aa).

Residues 1–128 form the C2 domain; it reads MSLAASAGRG…DQGRRKKQWY (128 aa). Residues 171-187 show a composition bias toward basic and acidic residues; that stretch reads PFGKLKDKIKGKNKDSA. The disordered stretch occupies residues 171–215; it reads PFGKLKDKIKGKNKDSASDTASAIVPSVTPSVDSDDESFSKDKKK. Ser-186, Ser-204, Ser-208, and Ser-236 each carry phosphoserine. The tract at residues 259–296 is disordered; that stretch reads WDDDAHEDESSSASDVMSHKRTSSTDQQPNQSNFSLPK. Residues 282–293 are compositionally biased toward polar residues; sequence STDQQPNQSNFS. Phosphoserine is present on residues Ser-301, Ser-316, Ser-340, Ser-342, Ser-344, Ser-346, Ser-357, Ser-358, and Ser-383. A disordered region spans residues 330–545; it reads PEARSEIRES…PRPHPVKPMN (216 aa). Composition is skewed to basic and acidic residues over residues 378-391 and 418-432; these read SDRR…KDSM and AARE…ESKK. Ser-434 is subject to Phosphoserine. Basic and acidic residues predominate over residues 459–487; it reads SEKEKERKGALVEAQLREEDLMRRPEKDA. Residues 573–635 form the FIP-RBD domain; that stretch reads KKYQPSDPAF…EETPNILRVP (63 aa). The interval 581-645 is necessary for interaction with RAB4A and RAB11A, subcellular location and endosomal recycling; the sequence is AFAYAQLTHD…AQMGKKAGKM (65 aa).

In terms of assembly, homooligomer. Interacts with RAB11A, RAB11B, RAB25, RAB4A and RAB14.

It localises to the recycling endosome. It is found in the cytoplasmic vesicle. A Rab11 effector protein involved in the endosomal recycling process. Also involved in controlling membrane trafficking along the phagocytic pathway and in phagocytosis. Interaction with RAB14 may function in the process of neurite formation. The sequence is that of Rab11 family-interacting protein 1 (Rab11fip1) from Mus musculus (Mouse).